The primary structure comprises 210 residues: Protein DrgA (210 aa).

The protein belongs to the nitroreductase family. The cofactor is FMN.

Controls resistance to the herbicide Dinoseb and metronidazole. Involved in detoxification of Dinoseb via the reduction of the nitro group(s) and this process is accompanied by the formation of toxic superoxide anions. The protein is Protein DrgA (drgA) of Synechocystis sp. (strain ATCC 27184 / PCC 6803 / Kazusa).